The chain runs to 158 residues: Kelch repeat protein B10 (158 aa).

Kelch repeat units follow at residues 25-76 (TIFV…STFG) and 77-129 (MLYF…KLNN).

Belongs to the poxviruses Kelch family.

The polypeptide is Kelch repeat protein B10 (Vaccinia virus (strain Ankara) (VACV)).